A 149-amino-acid chain; its full sequence is ATP synthase epsilon chain (149 aa).

Composition is skewed to basic and acidic residues over residues 99 to 116 and 123 to 134; these read DVERAESAEERAKRRLEE and RETHEAARDRAR. The disordered stretch occupies residues 99 to 149; the sequence is DVERAESAEERAKRRLEEGVQEEERETHEAARDRARNRLRVAMGKVGTRQS.

The protein belongs to the ATPase epsilon chain family. As to quaternary structure, F-type ATPases have 2 components, CF(1) - the catalytic core - and CF(0) - the membrane proton channel. CF(1) has five subunits: alpha(3), beta(3), gamma(1), delta(1), epsilon(1). CF(0) has three main subunits: a, b and c.

Its subcellular location is the cell inner membrane. Functionally, produces ATP from ADP in the presence of a proton gradient across the membrane. This chain is ATP synthase epsilon chain, found in Salinibacter ruber (strain DSM 13855 / M31).